The chain runs to 390 residues: MGSLQAMRRAQRAQGPATIMAVGTSNPPNLYEQTSYPDFYFRVTNSDHKHALKNKFRVICEKTKVKRRYLHLTEEILKQRPKLCSYMEPSFDDRQDIVVEEIPKLAKEAAEKAIKEWGRPKSEITHLVFCSISGIDMPGADYRLATLLGLPLSVNRLMLYSQACHMGAQMLRIAKDLAENNRGARVLAVSCEITVLSFRGPDAGDFEALACQAGFGDGAAAVVVGADPLPGVERPIYEIAAAMQETVPESERAVGGHLREIGWTFHFFNQLPKLIAENIEGSLARAFKPLGISEWNDVFWVAHPGNWGIMDAIETKLGLEQGKLATARHVFSEYGNMQSATVYFVMDEVRKRSAAEGRATTGEGLEWGVLFGFGPGLTIETVVLRSVPLP.

The active site involves Cys-164.

The protein belongs to the thiolase-like superfamily. Chalcone/stilbene synthases family. As to quaternary structure, homodimer.

It carries out the reaction (E)-feruloylacetyl-CoA + (E)-feruloyl-CoA + H2O = curcumin + CO2 + 2 CoA. The enzyme catalyses (E)-feruloylacetyl-CoA + (E)-4-coumaroyl-CoA + H2O = demethoxycurcumin + CO2 + 2 CoA. It catalyses the reaction (4-coumaroyl)acetyl-CoA + 4-coumaroyl-CoA + H2O = bisdemethoxycurcumin + CO2 + 2 CoA. It functions in the pathway secondary metabolite biosynthesis; flavonoid biosynthesis. Functionally, catalyzes the synthesis of curcumin by condensing feruloyl-CoA with a diketide-CoA in the curcuminoid biosynthesis. Also acts as a demethoxycurcumin synthase by accepting 4-coumaroyl-CoA as a starter substrate instead of feruloyl-CoA. The protein is Curcumin synthase 3 (CURS3) of Curcuma longa (Turmeric).